The sequence spans 245 residues: NAD-dependent protein deacylase (245 aa).

A Deacetylase sirtuin-type domain is found at 1-245 (MEAVWESARI…RLSRAMGIDI (245 aa)). 22 to 41 (GAGISAESGIPTFRGKDGLW) lines the NAD(+) pocket. The substrate site is built by Y66 and R69. 100 to 103 (QNVD) is an NAD(+) binding site. The Proton acceptor role is filled by H118. Zn(2+) contacts are provided by C126, C129, C146, and C149. Residues 186–188 (GTS), 212–214 (NPE), and M241 contribute to the NAD(+) site.

The protein belongs to the sirtuin family. Class III subfamily. Zn(2+) is required as a cofactor.

Its subcellular location is the cytoplasm. It catalyses the reaction N(6)-acetyl-L-lysyl-[protein] + NAD(+) + H2O = 2''-O-acetyl-ADP-D-ribose + nicotinamide + L-lysyl-[protein]. The catalysed reaction is N(6)-succinyl-L-lysyl-[protein] + NAD(+) + H2O = 2''-O-succinyl-ADP-D-ribose + nicotinamide + L-lysyl-[protein]. Its function is as follows. NAD-dependent lysine deacetylase and desuccinylase that specifically removes acetyl and succinyl groups on target proteins. Modulates the activities of several proteins which are inactive in their acylated form. Deacetylates the N-terminal lysine residue of Alba, the major archaeal chromatin protein and that, in turn, increases Alba's DNA binding affinity, thereby repressing transcription. This is NAD-dependent protein deacylase from Aeropyrum pernix (strain ATCC 700893 / DSM 11879 / JCM 9820 / NBRC 100138 / K1).